The following is a 457-amino-acid chain: Acetate--CoA ligase [ADP-forming] II subunit alpha (457 aa).

This sequence belongs to the acetate CoA ligase alpha subunit family. As to quaternary structure, heterotetramer of two alpha and two beta subunits.

The enzyme catalyses acetate + ATP + CoA = acetyl-CoA + ADP + phosphate. Catalyzes the reversible formation of acetate and ATP from acetyl-CoA by using ADP and phosphate. Can use other substrates such as phenylacetyl-CoA, indoleacetyl-CoA and isobutyryl-CoA, but not succinyl-CoA. Seems to be involved primarily in the degradation of aryl-CoA esters to the corresponding acids. Participates in the conversion of acetyl-CoA to acetate and in the degradation of branched-chain amino acids via branched-chain-acyl-CoA esters. In Pyrococcus furiosus (strain ATCC 43587 / DSM 3638 / JCM 8422 / Vc1), this protein is Acetate--CoA ligase [ADP-forming] II subunit alpha.